Here is a 388-residue protein sequence, read N- to C-terminus: Succinate--CoA ligase [ADP-forming] subunit beta (388 aa).

The region spanning 9 to 244 (KALFAEYGLP…PSQDDAREAH (236 aa)) is the ATP-grasp domain. Residues Lys46, 53–55 (GRG), Glu99, Thr102, and Glu107 each bind ATP. Asn199 and Asp213 together coordinate Mg(2+). Substrate is bound by residues Asn264 and 321-323 (GIV).

It belongs to the succinate/malate CoA ligase beta subunit family. Heterotetramer of two alpha and two beta subunits. Requires Mg(2+) as cofactor.

It carries out the reaction succinate + ATP + CoA = succinyl-CoA + ADP + phosphate. The enzyme catalyses GTP + succinate + CoA = succinyl-CoA + GDP + phosphate. Its pathway is carbohydrate metabolism; tricarboxylic acid cycle; succinate from succinyl-CoA (ligase route): step 1/1. Its function is as follows. Succinyl-CoA synthetase functions in the citric acid cycle (TCA), coupling the hydrolysis of succinyl-CoA to the synthesis of either ATP or GTP and thus represents the only step of substrate-level phosphorylation in the TCA. The beta subunit provides nucleotide specificity of the enzyme and binds the substrate succinate, while the binding sites for coenzyme A and phosphate are found in the alpha subunit. This is Succinate--CoA ligase [ADP-forming] subunit beta from Shewanella amazonensis (strain ATCC BAA-1098 / SB2B).